The sequence spans 332 residues: Phosphatidylglycerol--prolipoprotein diacylglyceryl transferase (332 aa).

Helical transmembrane passes span 18-38 (FPYF…AYIL), 66-86 (FFTW…TMVY), and 111-131 (VGLR…GGGL). Arg159 contacts a 1,2-diacyl-sn-glycero-3-phospho-(1'-sn-glycerol). Transmembrane regions (helical) follow at residues 249 to 269 (GFLV…IEYF) and 302 to 322 (ILCV…SAYH).

This sequence belongs to the Lgt family.

The protein resides in the cell inner membrane. It catalyses the reaction L-cysteinyl-[prolipoprotein] + a 1,2-diacyl-sn-glycero-3-phospho-(1'-sn-glycerol) = an S-1,2-diacyl-sn-glyceryl-L-cysteinyl-[prolipoprotein] + sn-glycerol 1-phosphate + H(+). It participates in protein modification; lipoprotein biosynthesis (diacylglyceryl transfer). In terms of biological role, catalyzes the transfer of the diacylglyceryl group from phosphatidylglycerol to the sulfhydryl group of the N-terminal cysteine of a prolipoprotein, the first step in the formation of mature lipoproteins. The sequence is that of Phosphatidylglycerol--prolipoprotein diacylglyceryl transferase from Treponema pallidum (strain Nichols).